A 392-amino-acid chain; its full sequence is Anhydro-N-acetylmuramic acid kinase (392 aa).

22–29 provides a ligand contact to ATP; that stretch reads GTSMDGVD.

This sequence belongs to the anhydro-N-acetylmuramic acid kinase family.

It carries out the reaction 1,6-anhydro-N-acetyl-beta-muramate + ATP + H2O = N-acetyl-D-muramate 6-phosphate + ADP + H(+). Its pathway is amino-sugar metabolism; 1,6-anhydro-N-acetylmuramate degradation. It functions in the pathway cell wall biogenesis; peptidoglycan recycling. Its function is as follows. Catalyzes the specific phosphorylation of 1,6-anhydro-N-acetylmuramic acid (anhMurNAc) with the simultaneous cleavage of the 1,6-anhydro ring, generating MurNAc-6-P. Is required for the utilization of anhMurNAc either imported from the medium or derived from its own cell wall murein, and thus plays a role in cell wall recycling. The protein is Anhydro-N-acetylmuramic acid kinase of Burkholderia pseudomallei (strain 1106a).